The primary structure comprises 556 residues: MNVMQENQIKLIAHIKQAVVQAVGLEEAEVPEILLEVPKDKKHGDYSTNIAMQLARVAKKAPRQIAESIVPELKKDNKLIKEVEIAGPGFINFYLDNAYLTDLVPVILTEDKQYGESDFGKGEKFQIEFVSANPTGDLHLGHARGAAIGDSLANIMKMAGFDVSREYYINDAGNQINNLVLSAEARYFEALGLDSEFPEDGYRGADIISLGKDLAAKYGDKYVHTSEEERRSVFRVDALAFETGKLRADLEEFRVSFDEWFSETSLYEENKVLPALERLRENGYIYEQDGATWLRTTDFEDDKDRVLIKSDGSYTYFLPDIAYHLNKLERGFDVLIDIWGADHHGYIPRMRAAIEALGYSPNQLEVEIIQLVHLFEDGVQVKMSKRTGKSVTMRDLIEEVGLDATRYFFAMRSSDTHMNFDMSLAKSTSNDNPVYYVQYAHARISSILRSGKEQGLEVTKDADMSLLQTEAEYDLLKVLGEFADVVAEAATKRAPHRIVRYLNDLASAFHRFYNSNKVLDMDNLEVTKARLALIKTAQITLRNGLTLLGVSAPEKM.

Residues 132–142 carry the 'HIGH' region motif; that stretch reads ANPTGDLHLGH.

This sequence belongs to the class-I aminoacyl-tRNA synthetase family. In terms of assembly, monomer.

It is found in the cytoplasm. It carries out the reaction tRNA(Arg) + L-arginine + ATP = L-arginyl-tRNA(Arg) + AMP + diphosphate. The polypeptide is Arginine--tRNA ligase (Listeria monocytogenes serotype 4a (strain HCC23)).